The chain runs to 328 residues: RNA-binding motif protein, X-linked 2 (328 aa).

Lys8 participates in a covalent cross-link: Glycyl lysine isopeptide (Lys-Gly) (interchain with G-Cter in SUMO2). The RRM domain occupies 36 to 114 (AWIFLGGLPY…RTIRVDHVAN (79 aa)). Positions 118-328 (PQESEDVDDV…SFHASDRRHY (211 aa)) are disordered. Thr140 is modified (phosphothreonine). A Phosphoserine modification is found at Ser149. Positions 157 to 172 (TKKPKKDKKEKKKKKE) are enriched in basic residues. 3 stretches are compositionally biased toward basic and acidic residues: residues 192–219 (TVKETDEQSAKKHSSKPSERAQKSECRE), 236–247 (GRAEEPEWEAKK), and 255–273 (KPSSRREGEEKSRDKDRGR). A Glycyl lysine isopeptide (Lys-Gly) (interchain with G-Cter in SUMO2) cross-link involves residue Lys246. Position 274 is a phosphoserine (Ser274). Residues 291–314 (HRSRSRSRSRSPDRSHRHKKHRYS) are compositionally biased toward basic residues. Basic and acidic residues predominate over residues 315–328 (HERESFHASDRRHY).

The protein belongs to the IST3 family. As to quaternary structure, part of the activated spliceosome B/catalytic step 1 spliceosome, one of the forms of the spliceosome which has a well-formed active site but still cannot catalyze the branching reaction and is composed of at least 52 proteins, the U2, U5 and U6 snRNAs and the pre-mRNA. Component of the minor spliceosome, which splices U12-type introns.

Its subcellular location is the nucleus. In terms of biological role, involved in pre-mRNA splicing as component of the activated spliceosome. As a component of the minor spliceosome, involved in the splicing of U12-type introns in pre-mRNAs. This chain is RNA-binding motif protein, X-linked 2 (Rbmx2), found in Rattus norvegicus (Rat).